The following is a 362-amino-acid chain: L-asparaginase 2-1 (362 aa).

A signal peptide spans 1 to 25 (MRSLNTLLLSLFVAMSSGAPLLKIR). Residue Asn-29 is glycosylated (N-linked (GlcNAc...) asparagine). The 327-residue stretch at 33-359 (PSIKIFGTGG…DQIRSVFSGV (327 aa)) folds into the Asparaginase/glutaminase domain. Residue Thr-43 is the O-isoaspartyl threonine intermediate of the active site. Ser-89 contributes to the substrate binding site. An N-linked (GlcNAc...) asparagine glycan is attached at Asn-93. 122–123 (TD) is a substrate binding site. A glycan (N-linked (GlcNAc...) asparagine) is linked at Asn-239.

The protein belongs to the asparaginase 1 family.

It localises to the secreted. The protein resides in the periplasm. It catalyses the reaction L-asparagine + H2O = L-aspartate + NH4(+). The protein is L-asparaginase 2-1 (ASP3-1) of Saccharomyces cerevisiae (strain ATCC 204508 / S288c) (Baker's yeast).